The primary structure comprises 206 residues: Cytidylate kinase (206 aa).

Residue G7–T15 coordinates ATP.

Belongs to the cytidylate kinase family. Type 1 subfamily.

The protein localises to the cytoplasm. It catalyses the reaction CMP + ATP = CDP + ADP. The enzyme catalyses dCMP + ATP = dCDP + ADP. This Azorhizobium caulinodans (strain ATCC 43989 / DSM 5975 / JCM 20966 / LMG 6465 / NBRC 14845 / NCIMB 13405 / ORS 571) protein is Cytidylate kinase.